The primary structure comprises 1187 residues: Non-receptor tyrosine-protein kinase TYK2 (1187 aa).

An FERM domain is found at 26 to 431 (GGLKVLLHWA…GYFRLTADSS (406 aa)). A Phosphotyrosine modification is found at Y292. Residues 335 to 366 (KEEGSSGSSGRNPQASLFGKKAKAHKAVGQPA) are disordered. The span at 339–349 (SSGSSGRNPQA) shows a compositional bias: polar residues. Residues 450–529 (GIHGPLLEPF…GRSFPSVREL (80 aa)) enclose the SH2; atypical domain. Phosphoserine occurs at positions 499 and 525. The Protein kinase 1 domain occupies 589 to 875 (ITQLSHLGQG…LTRLQPHNLA (287 aa)). The residue at position 604 (Y604) is a Phosphotyrosine. Residues 610–629 (VEGSGDPEEGKMDDEDPLVP) are disordered. The segment covering 614–626 (GDPEEGKMDDEDP) has biased composition (acidic residues). S884 is modified (phosphoserine). The Protein kinase 2 domain maps to 897–1176 (LKKIRDLGEG…PILKTVHEKY (280 aa)). ATP is bound by residues 903–911 (LGEGHFGKV) and K930. Residue D1023 is the Proton acceptor of the active site. Y1054 is subject to Phosphotyrosine; by autocatalysis. The residue at position 1055 (Y1055) is a Phosphotyrosine.

This sequence belongs to the protein kinase superfamily. Tyr protein kinase family. JAK subfamily. Interacts (via FERM domain) with JAKMIP1. Interacts with PIK3R1; this interaction is important for cell migration. Interacts with MPL/TPOR. In terms of assembly, (Microbial infection) Interacts with Epstein-Barr virus protein LMP1; this interaction inhibits TYK2-mediated interferon signaling. As to quaternary structure, (Microbial infection) Interacts with papillomavirus-18 protein E6; this interaction impairs JAK-STAT activation by interferon-alpha. (Microbial infection) Interacts with Epstein-Barr virus (EBV) tegument protein BGLF2; this interaction participates in the inhibition of type I IFN signaling by the virus. In terms of processing, phosphorylated. Phosphorylation by JAK1 at Tyr-1054 and Tyr-1055 induces kinase activation. Observed in all cell lines analyzed. Expressed in a variety of lymphoid and non-lymphoid cell lines.

It catalyses the reaction L-tyrosyl-[protein] + ATP = O-phospho-L-tyrosyl-[protein] + ADP + H(+). With respect to regulation, the protein kinase 1 domain (also termed pseudokinase domain) mediates autoinhibition of the TYK2 kinase domain. Its function is as follows. Tyrosine kinase of the non-receptor type involved in numerous cytokines and interferons signaling, which regulates cell growth, development, cell migration, innate and adaptive immunity. Plays both structural and catalytic roles in numerous interleukins and interferons (IFN-alpha/beta) signaling. Associates with heterodimeric cytokine receptor complexes and activates STAT family members including STAT1, STAT3, STAT4 or STAT6. The heterodimeric cytokine receptor complexes are composed of (1) a TYK2-associated receptor chain (IFNAR1, IL12RB1, IL10RB or IL13RA1), and (2) a second receptor chain associated either with JAK1 or JAK2. In response to cytokine-binding to receptors, phosphorylates and activates receptors (IFNAR1, IL12RB1, IL10RB or IL13RA1), creating docking sites for STAT members. In turn, recruited STATs are phosphorylated by TYK2 (or JAK1/JAK2 on the second receptor chain), form homo- and heterodimers, translocate to the nucleus, and regulate cytokine/growth factor responsive genes. Negatively regulates STAT3 activity by promototing phosphorylation at a specific tyrosine that differs from the site used for signaling. In Homo sapiens (Human), this protein is Non-receptor tyrosine-protein kinase TYK2 (TYK2).